The sequence spans 179 residues: Small ribosomal subunit protein uS5 (179 aa).

An S5 DRBM domain is found at 22–85; sequence MIEKLVAVNR…EYARKTMANV (64 aa).

Belongs to the universal ribosomal protein uS5 family. Part of the 30S ribosomal subunit. Contacts proteins S4 and S8.

Functionally, with S4 and S12 plays an important role in translational accuracy. In terms of biological role, located at the back of the 30S subunit body where it stabilizes the conformation of the head with respect to the body. This is Small ribosomal subunit protein uS5 from Xylella fastidiosa (strain 9a5c).